The following is a 447-amino-acid chain: UPF0597 protein Amet_4665 (447 aa).

The protein belongs to the UPF0597 family.

The sequence is that of UPF0597 protein Amet_4665 from Alkaliphilus metalliredigens (strain QYMF).